Consider the following 146-residue polypeptide: MDKQIPKFEITRSSLLDQCKSFLPELEKANQTLLEHPDSQQDVQNLSDESNYIEMDLALGVLEKQPENSISEDTESEIQANENQGTLEHLMNLYNSRDREKGNEVTLTDFLHEKLSRAAQADLEHEESASIDQDEMVAIETRKTKK.

A compositionally biased stretch (basic and acidic residues) spans 119–128 (AQADLEHEES). A disordered region spans residues 119–146 (AQADLEHEESASIDQDEMVAIETRKTKK).

This is an uncharacterized protein from Schizosaccharomyces pombe (strain 972 / ATCC 24843) (Fission yeast).